We begin with the raw amino-acid sequence, 374 residues long: MNLIEIREGKASLLIPNPKDYEKEGRYDPSWSPVFYNPKMRLNRDISVLALSVIKPKSVVDALSASGVRGIRYYTEIGGIEKLILNDKNPIATELIKKNAEKNYVNARITTKDANSLLYEIKADFVDIDPFGSPAPFILSAINATINKGYVAFTATDLSALECSSKFSARRKYDLICERLSFSKELGIRGLIAKVIREGAIIEKAAYPIFSFYFDYYYRVFFRIENGAKKVDKLLEKQGYYYECSKCGYREVDYYAERKICPRCGIEMRRYGPAWTGELWNREFLLSMKENLKNFTYFDTFMQVNKLLNILVEESKYVSPYFRLDFIASLIKRNIPKREKMLECLKEASITHFDYRGIKTNKEIDEIVNCIKIN.

Residues 4–371 (IEIREGKASL…KEIDEIVNCI (368 aa)) form the Trm1 methyltransferase domain. Arg-44, Arg-69, Asp-87, Asp-113, and Ala-114 together coordinate S-adenosyl-L-methionine. Zn(2+)-binding residues include Cys-244, Cys-247, Cys-261, and Cys-264.

The protein belongs to the class I-like SAM-binding methyltransferase superfamily. Trm1 family.

It catalyses the reaction guanosine(26) in tRNA + 2 S-adenosyl-L-methionine = N(2)-dimethylguanosine(26) in tRNA + 2 S-adenosyl-L-homocysteine + 2 H(+). In terms of biological role, dimethylates a single guanine residue at position 26 of a number of tRNAs using S-adenosyl-L-methionine as donor of the methyl groups. In Sulfurisphaera tokodaii (strain DSM 16993 / JCM 10545 / NBRC 100140 / 7) (Sulfolobus tokodaii), this protein is tRNA (guanine(26)-N(2))-dimethyltransferase.